The chain runs to 609 residues: Spore-specific protein YSW1 (609 aa).

Positions 1-24 (MSSLADTVEGSEAKRGRFSNNALT) are disordered. A phosphoserine mark is found at serine 159 and serine 160. The interval 162-225 (DENESHFTDA…DDEFSPATPP (64 aa)) is disordered. Residues 169-179 (TDANSHVMQSK) show a composition bias toward polar residues. Residues 200–209 (LKKEYEKSFE) are compositionally biased toward basic and acidic residues. Acidic residues predominate over residues 210-219 (EYSDDSDDEF).

This chain is Spore-specific protein YSW1 (YSW1), found in Saccharomyces cerevisiae (strain ATCC 204508 / S288c) (Baker's yeast).